Here is a 367-residue protein sequence, read N- to C-terminus: 3-dehydroquinate synthase (367 aa).

Residues 69–74 (DGEAFK), 103–107 (GVIGD), 127–128 (TT), Lys140, and Lys149 contribute to the NAD(+) site. Zn(2+)-binding residues include Glu182, His245, and His262.

It belongs to the sugar phosphate cyclases superfamily. Dehydroquinate synthase family. It depends on Co(2+) as a cofactor. Requires Zn(2+) as cofactor. NAD(+) serves as cofactor.

The protein resides in the cytoplasm. It carries out the reaction 7-phospho-2-dehydro-3-deoxy-D-arabino-heptonate = 3-dehydroquinate + phosphate. It participates in metabolic intermediate biosynthesis; chorismate biosynthesis; chorismate from D-erythrose 4-phosphate and phosphoenolpyruvate: step 2/7. Functionally, catalyzes the conversion of 3-deoxy-D-arabino-heptulosonate 7-phosphate (DAHP) to dehydroquinate (DHQ). This is 3-dehydroquinate synthase from Ectopseudomonas mendocina (strain ymp) (Pseudomonas mendocina).